A 124-amino-acid polypeptide reads, in one-letter code: Large ribosomal subunit protein uL22 (124 aa).

Belongs to the universal ribosomal protein uL22 family. As to quaternary structure, part of the 50S ribosomal subunit.

In terms of biological role, this protein binds specifically to 23S rRNA; its binding is stimulated by other ribosomal proteins, e.g. L4, L17, and L20. It is important during the early stages of 50S assembly. It makes multiple contacts with different domains of the 23S rRNA in the assembled 50S subunit and ribosome. The globular domain of the protein is located near the polypeptide exit tunnel on the outside of the subunit, while an extended beta-hairpin is found that lines the wall of the exit tunnel in the center of the 70S ribosome. The chain is Large ribosomal subunit protein uL22 from Campylobacter lari (strain RM2100 / D67 / ATCC BAA-1060).